Here is a 117-residue protein sequence, read N- to C-terminus: MIPGEYVLRPEPVTANAGRDAIELSVTNTGDRPVQVGSHFHFAEANAALDFDRAAARGRRLDIPAGTAARFEPGDSRSVRLIELAGSREVFGLSNAVNGKLDGGPHPGVPATERGAK.

Residues 95–117 are disordered; that stretch reads NAVNGKLDGGPHPGVPATERGAK.

It belongs to the urease beta subunit family. In terms of assembly, heterotrimer of UreA (gamma), UreB (beta) and UreC (alpha) subunits. Three heterotrimers associate to form the active enzyme.

The protein localises to the cytoplasm. The catalysed reaction is urea + 2 H2O + H(+) = hydrogencarbonate + 2 NH4(+). It participates in nitrogen metabolism; urea degradation; CO(2) and NH(3) from urea (urease route): step 1/1. The polypeptide is Urease subunit beta (Pseudarthrobacter chlorophenolicus (strain ATCC 700700 / DSM 12829 / CIP 107037 / JCM 12360 / KCTC 9906 / NCIMB 13794 / A6) (Arthrobacter chlorophenolicus)).